A 723-amino-acid polypeptide reads, in one-letter code: Probable inactive serine/threonine-protein kinase fnkD (723 aa).

Residues 33–276 (WEIITQLESN…TTSLPKYSTL (244 aa)) form the Protein kinase domain. FNIP repeat units lie at residues 301–342 (FNQP…ELAS), 343–384 (FNQT…LLSS), 385–426 (FNQP…SLAS), 524–565 (FNQS…ILPS), 566–606 (FNHP…LGDE), and 647–690 (FNIE…FGIT).

This sequence belongs to the protein kinase superfamily. STE Ser/Thr protein kinase family.

The protein is Probable inactive serine/threonine-protein kinase fnkD (fnkD-1) of Dictyostelium discoideum (Social amoeba).